The sequence spans 226 residues: Ribonuclease 3 (226 aa).

Positions 7–129 (LPRLCRTLGY…IIGAIYLDSD (123 aa)) constitute an RNase III domain. Glu-42 serves as a coordination point for Mg(2+). Asp-46 is a catalytic residue. Mg(2+) contacts are provided by Asp-115 and Glu-118. Residue Glu-118 is part of the active site. In terms of domain architecture, DRBM spans 156-226 (DAKTLLQEYL…AAQVLELLKK (71 aa)).

The protein belongs to the ribonuclease III family. Homodimer. It depends on Mg(2+) as a cofactor.

The protein resides in the cytoplasm. It catalyses the reaction Endonucleolytic cleavage to 5'-phosphomonoester.. Functionally, digests double-stranded RNA. Involved in the processing of primary rRNA transcript to yield the immediate precursors to the large and small rRNAs (23S and 16S). Processes some mRNAs, and tRNAs when they are encoded in the rRNA operon. Processes pre-crRNA and tracrRNA of type II CRISPR loci if present in the organism. The chain is Ribonuclease 3 from Shewanella sp. (strain ANA-3).